Consider the following 97-residue polypeptide: Ferredoxin-3 (97 aa).

4Fe-4S ferredoxin-type domains lie at 18–47 (FAES…LKAL) and 65–95 (KVMV…HNPL). [4Fe-4S] cluster contacts are provided by Cys27, Cys30, Cys33, Cys37, Cys75, Cys78, Cys81, and Cys85.

As to quaternary structure, homodimer. Requires [4Fe-4S] cluster as cofactor.

Ferredoxins are iron-sulfur proteins that transfer electrons in a wide variety of metabolic reactions. The polypeptide is Ferredoxin-3 (fdxB) (Nostoc sp. (strain PCC 7120 / SAG 25.82 / UTEX 2576)).